The sequence spans 173 residues: Transcription factor E (173 aa).

The HTH TFE/IIEalpha-type domain maps to 9–92; sequence NNPATRAYIH…LWQLRIDLLY (84 aa).

It belongs to the TFE family. Monomer. Interaction with RNA polymerase subunits RpoF and RpoE is necessary for Tfe stimulatory transcription activity. Able to interact with Tbp and RNA polymerase in the absence of DNA promoter. Interacts both with the preinitiation and elongation complexes.

Transcription factor that plays a role in the activation of archaeal genes transcribed by RNA polymerase. Facilitates transcription initiation by enhancing TATA-box recognition by TATA-box-binding protein (Tbp), and transcription factor B (Tfb) and RNA polymerase recruitment. Not absolutely required for transcription in vitro, but particularly important in cases where Tbp or Tfb function is not optimal. It dynamically alters the nucleic acid-binding properties of RNA polymerases by stabilizing the initiation complex and destabilizing elongation complexes. Seems to translocate with the RNA polymerase following initiation and acts by binding to the non template strand of the transcription bubble in elongation complexes. The polypeptide is Transcription factor E (Methanoregula boonei (strain DSM 21154 / JCM 14090 / 6A8)).